Here is a 167-residue protein sequence, read N- to C-terminus: Leukotoxin-activating lysine-acyltransferase LktC serotype T3 (167 aa).

Active-site residues include His22 and Asp91.

It belongs to the RTX toxin acyltransferase family.

It is found in the cytoplasm. It catalyses the reaction a fatty acyl-[ACP] + L-lysyl-[protein] = N(6)-(fatty acyl)-L-lysyl-[protein] + holo-[ACP] + H(+). Functionally, involved in fatty acylation of the protoxin (LktA) at two internal lysine residues, thereby converting it to the active toxin. This chain is Leukotoxin-activating lysine-acyltransferase LktC serotype T3 (lktC), found in Mannheimia haemolytica (Pasteurella haemolytica).